Here is a 261-residue protein sequence, read N- to C-terminus: Cytochrome c oxidase subunit 3 (261 aa).

The Mitochondrial matrix segment spans residues 1-15; it reads MAHQAHAYHMVDPSP. A helical membrane pass occupies residues 16 to 34; that stretch reads WPLTGAIAALLLTSGTAVW. The Mitochondrial intermembrane segment spans residues 35–40; it reads FHFHSL. The chain crosses the membrane as a helical span at residues 41-66; it reads TLLTLGNVLLLLTMYQWWRDIIREGT. Residues 67–72 lie on the Mitochondrial matrix side of the membrane; it reads FQGHHT. Residues 73 to 105 form a helical membrane-spanning segment; that stretch reads PPVQKGLRYGMILFITSEVFFFLGFFWAFYHAS. Residues 106–128 are Mitochondrial intermembrane-facing; that stretch reads LAPTPELGGCWPPTGITTLDPFE. A helical membrane pass occupies residues 129-152; sequence VPLLNTAVLLASGVTVTWAHHSIM. The Mitochondrial matrix portion of the chain corresponds to 153–155; that stretch reads EGE. A helical membrane pass occupies residues 156–183; it reads RKQTIQALTLTILLGFYFTFLQGMEYYE. The Mitochondrial intermembrane segment spans residues 184 to 190; it reads APFTIAD. The helical transmembrane segment at 191 to 223 threads the bilayer; that stretch reads GVYGSTFFVATGFHGLHVIIGSTFLAVCLLRQV. Residues 224–232 lie on the Mitochondrial matrix side of the membrane; the sequence is QYHFTSEHH. Residues 233 to 256 traverse the membrane as a helical segment; it reads FGFEAAAWYWHFVDVVWLFLYVSI. Residues 257–261 are Mitochondrial intermembrane-facing; that stretch reads YWWGS.

This sequence belongs to the cytochrome c oxidase subunit 3 family. As to quaternary structure, component of the cytochrome c oxidase (complex IV, CIV), a multisubunit enzyme composed of 14 subunits. The complex is composed of a catalytic core of 3 subunits MT-CO1, MT-CO2 and MT-CO3, encoded in the mitochondrial DNA, and 11 supernumerary subunits COX4I, COX5A, COX5B, COX6A, COX6B, COX6C, COX7A, COX7B, COX7C, COX8 and NDUFA4, which are encoded in the nuclear genome. The complex exists as a monomer or a dimer and forms supercomplexes (SCs) in the inner mitochondrial membrane with NADH-ubiquinone oxidoreductase (complex I, CI) and ubiquinol-cytochrome c oxidoreductase (cytochrome b-c1 complex, complex III, CIII), resulting in different assemblies (supercomplex SCI(1)III(2)IV(1) and megacomplex MCI(2)III(2)IV(2)).

The protein resides in the mitochondrion inner membrane. The catalysed reaction is 4 Fe(II)-[cytochrome c] + O2 + 8 H(+)(in) = 4 Fe(III)-[cytochrome c] + 2 H2O + 4 H(+)(out). Functionally, component of the cytochrome c oxidase, the last enzyme in the mitochondrial electron transport chain which drives oxidative phosphorylation. The respiratory chain contains 3 multisubunit complexes succinate dehydrogenase (complex II, CII), ubiquinol-cytochrome c oxidoreductase (cytochrome b-c1 complex, complex III, CIII) and cytochrome c oxidase (complex IV, CIV), that cooperate to transfer electrons derived from NADH and succinate to molecular oxygen, creating an electrochemical gradient over the inner membrane that drives transmembrane transport and the ATP synthase. Cytochrome c oxidase is the component of the respiratory chain that catalyzes the reduction of oxygen to water. Electrons originating from reduced cytochrome c in the intermembrane space (IMS) are transferred via the dinuclear copper A center (CU(A)) of subunit 2 and heme A of subunit 1 to the active site in subunit 1, a binuclear center (BNC) formed by heme A3 and copper B (CU(B)). The BNC reduces molecular oxygen to 2 water molecules using 4 electrons from cytochrome c in the IMS and 4 protons from the mitochondrial matrix. The protein is Cytochrome c oxidase subunit 3 (mt-co3) of Oncorhynchus masou (Cherry salmon).